A 487-amino-acid polypeptide reads, in one-letter code: MESVALSRIGLAGLAVMGQNLALNIADKGFPISVYNRTTSKVDETLDRASNEGKLPVAGQYSPRDFVLSIQRPRSVIILVKAGAPVDQTISALSEYMEPGDCIIDGGNEWYQNTERRIVEAEKKGLLYLGMGVSGGEEGARNGPSLMPGGSFTAYNNVKDILEKVAAQVEDGPCVTYIGEGGSGNFVKMVHNGIEYGDMQLISEAYDVLKNVGGLSNDELAEIFTEWNRGELESFLVEITSDIFRVKDDYGDGELVDKILDKTGMKGTGKWTVQQAAELSVAAPTIAASLDCRYLSGLKDERENAAKVLEEAGLKEDIGSASRGVDKKRLIDDVRQALYASKICSYAQGMNLLRAKSLEKGWDLNLGEMARIWKGGCIIRAVFLDRIKKAYQRNPNLASLVVDPDFAKEMVQRQAAWRRVVGLAISAGISTPGMCASLAYFDTYRRARLPANLVQAQRDLFGAHTYERTDRPGAYHTEWTKLARKSQ.

Methionine 1 is subject to N-acetylmethionine. NADP(+)-binding positions include 13–18 (GLAVMG), 36–38 (NRT), 80–82 (VKA), and asparagine 108. Substrate-binding positions include asparagine 108 and 134 to 136 (SGG). Lysine 188 serves as the catalytic Proton acceptor. 191–192 (HN) is a substrate binding site. Residue glutamate 195 is the Proton donor of the active site. Residues tyrosine 196, lysine 266, arginine 293, arginine 458, and histidine 464 each coordinate substrate.

It belongs to the 6-phosphogluconate dehydrogenase family. Forms homodimer. Forms heterodimers with PGD1 or PGD2.

The protein resides in the plastid. It localises to the chloroplast. Its subcellular location is the cytoplasm. It is found in the cytosol. It carries out the reaction 6-phospho-D-gluconate + NADP(+) = D-ribulose 5-phosphate + CO2 + NADPH. Its pathway is carbohydrate degradation; pentose phosphate pathway; D-ribulose 5-phosphate from D-glucose 6-phosphate (oxidative stage): step 3/3. Functionally, catalyzes the oxidative decarboxylation of 6-phosphogluconate to ribulose 5-phosphate and CO(2), with concomitant reduction of NADP to NADPH. The sequence is that of 6-phosphogluconate dehydrogenase, decarboxylating 3, chloroplastic from Arabidopsis thaliana (Mouse-ear cress).